Reading from the N-terminus, the 180-residue chain is Large ribosomal subunit protein uL6 (180 aa).

It belongs to the universal ribosomal protein uL6 family. As to quaternary structure, part of the 50S ribosomal subunit.

This protein binds to the 23S rRNA, and is important in its secondary structure. It is located near the subunit interface in the base of the L7/L12 stalk, and near the tRNA binding site of the peptidyltransferase center. This Salinispora arenicola (strain CNS-205) protein is Large ribosomal subunit protein uL6.